Consider the following 458-residue polypeptide: Paired box protein Pax-8 (458 aa).

The paired DNA-binding region spans 18-144 (GHGGLNQLGG…SSINRIIRTK (127 aa)). Residues 21-77 (GLNQLGGAFVNGRPLPEVVRQRIVDLAHQGVRPCDISRQLRVSHGCVSKILGRYYET) are PAI subdomain. The tract at residues 96-144 (KVVEKIGDYKRQNPTMFAWEIRDRLLAEGVCDNDTVPSVSSINRIIRTK) is RED subdomain. The interval 198–217 (PGADGKRKLDDSDQESCRLS) is disordered.

The protein resides in the nucleus. Probable transcription factor. Involved in kidney development, acting synergistically with lhx1/lim-1 to establish the pronephric primordium in late gastrulae/early neurulae. This chain is Paired box protein Pax-8, found in Xenopus tropicalis (Western clawed frog).